The following is a 165-amino-acid chain: Fimbrial protein (165 aa).

The signal sequence occupies residues 1–21; the sequence is MRKSASAVAVLALIACGSAHA.

It is found in the fimbrium. Its function is as follows. Structural subunit of the sef14 fimbriae. The polypeptide is Fimbrial protein (sefA) (Salmonella enteritidis).